Reading from the N-terminus, the 78-residue chain is Probable [Fe-S]-dependent transcriptional repressor (78 aa).

The iron-sulfur cluster site is built by C56, C61, C64, and C70.

It belongs to the FeoC family.

In terms of biological role, may function as a transcriptional regulator that controls feoABC expression. This chain is Probable [Fe-S]-dependent transcriptional repressor, found in Escherichia coli O17:K52:H18 (strain UMN026 / ExPEC).